The following is a 677-amino-acid chain: Vertnin (677 aa).

2 disordered regions span residues 356–376 (GSTG…SSPE) and 458–490 (HSGS…KLSP). Positions 458-472 (HSGSSEEGSDADKSQ) are enriched in basic and acidic residues.

This sequence belongs to the vertnin family.

Its subcellular location is the nucleus. Functionally, functions as a transcriptional repressor that modulates bmp2b expression during dorsoventral patterning. The sequence is that of Vertnin (vrtn) from Danio rerio (Zebrafish).